Consider the following 311-residue polypeptide: Methionyl-tRNA formyltransferase (311 aa).

109–112 (SLLP) provides a ligand contact to (6S)-5,6,7,8-tetrahydrofolate.

It belongs to the Fmt family.

It carries out the reaction L-methionyl-tRNA(fMet) + (6R)-10-formyltetrahydrofolate = N-formyl-L-methionyl-tRNA(fMet) + (6S)-5,6,7,8-tetrahydrofolate + H(+). Functionally, attaches a formyl group to the free amino group of methionyl-tRNA(fMet). The formyl group appears to play a dual role in the initiator identity of N-formylmethionyl-tRNA by promoting its recognition by IF2 and preventing the misappropriation of this tRNA by the elongation apparatus. In Staphylococcus aureus (strain JH1), this protein is Methionyl-tRNA formyltransferase.